The sequence spans 366 residues: Histidinol-phosphate aminotransferase (366 aa).

The residue at position 228 (Lys228) is an N6-(pyridoxal phosphate)lysine.

The protein belongs to the class-II pyridoxal-phosphate-dependent aminotransferase family. Histidinol-phosphate aminotransferase subfamily. As to quaternary structure, homodimer. Requires pyridoxal 5'-phosphate as cofactor.

The enzyme catalyses L-histidinol phosphate + 2-oxoglutarate = 3-(imidazol-4-yl)-2-oxopropyl phosphate + L-glutamate. Its pathway is amino-acid biosynthesis; L-histidine biosynthesis; L-histidine from 5-phospho-alpha-D-ribose 1-diphosphate: step 7/9. This Campylobacter fetus subsp. fetus (strain 82-40) protein is Histidinol-phosphate aminotransferase.